Here is a 715-residue protein sequence, read N- to C-terminus: Polyphosphate kinase (715 aa).

Asn60 contacts ATP. Residues Arg380 and Arg410 each contribute to the Mg(2+) site. Residue His440 is the Phosphohistidine intermediate of the active site. ATP is bound by residues Tyr473, Arg569, and His597.

Belongs to the polyphosphate kinase 1 (PPK1) family. It depends on Mg(2+) as a cofactor. Post-translationally, an intermediate of this reaction is the autophosphorylated ppk in which a phosphate is covalently linked to a histidine residue through a N-P bond.

The enzyme catalyses [phosphate](n) + ATP = [phosphate](n+1) + ADP. Functionally, catalyzes the reversible transfer of the terminal phosphate of ATP to form a long-chain polyphosphate (polyP). The polypeptide is Polyphosphate kinase (Erythrobacter litoralis (strain HTCC2594)).